The chain runs to 357 residues: Endo-1,4-beta-xylanase Xyn11B (357 aa).

Positions 1 to 27 (MKIFQNTKNVIVSIAWAAALCTSAVSA) are cleaved as a signal peptide. One can recognise a GH11 domain in the interval 29-226 (TLTSNSTGTN…SRGSSDITVS (198 aa)). The active-site Nucleophile is Glu116. The active-site Proton donor is Glu213. A disordered region spans residues 220-245 (SSDITVSQGGSSGGGNSSSSSSASGG).

This sequence belongs to the glycosyl hydrolase 11 (cellulase G) family.

It is found in the secreted. The enzyme catalyses Endohydrolysis of (1-&gt;4)-beta-D-xylosidic linkages in xylans.. It functions in the pathway glycan degradation; xylan degradation. Its function is as follows. Endo-acting xylanase which specifically cleaves internal linkages on the xylan backbone, releasing xylooligosaccharides. Is able to hydrolyze glucuronoxylan and the arabinoxylan from wheat. In Cellvibrio japonicus (Pseudomonas fluorescens subsp. cellulosa), this protein is Endo-1,4-beta-xylanase Xyn11B (xyn11B).